A 379-amino-acid chain; its full sequence is Arginine biosynthesis bifunctional protein ArgJ (379 aa).

Substrate is bound by residues T141, K163, T174, E252, N374, and T379. The active-site Nucleophile is T174.

The protein belongs to the ArgJ family. As to quaternary structure, heterotetramer of two alpha and two beta chains.

The protein localises to the cytoplasm. It carries out the reaction N(2)-acetyl-L-ornithine + L-glutamate = N-acetyl-L-glutamate + L-ornithine. The enzyme catalyses L-glutamate + acetyl-CoA = N-acetyl-L-glutamate + CoA + H(+). It participates in amino-acid biosynthesis; L-arginine biosynthesis; L-ornithine and N-acetyl-L-glutamate from L-glutamate and N(2)-acetyl-L-ornithine (cyclic): step 1/1. It functions in the pathway amino-acid biosynthesis; L-arginine biosynthesis; N(2)-acetyl-L-ornithine from L-glutamate: step 1/4. Functionally, catalyzes two activities which are involved in the cyclic version of arginine biosynthesis: the synthesis of N-acetylglutamate from glutamate and acetyl-CoA as the acetyl donor, and of ornithine by transacetylation between N(2)-acetylornithine and glutamate. In Aquifex aeolicus (strain VF5), this protein is Arginine biosynthesis bifunctional protein ArgJ.